Here is a 211-residue protein sequence, read N- to C-terminus: MNGILISLEGPDGAGKTTVLQEILPEIQKMKREVVPTREPGGVRVAEEIRQIILDPKNTEIDSKTELMLFAAARRLHMQEKMLPALRAGKVVIVDRFIDSSVAYQGYGRDLGVEVVDWLNYFATDGLKPDLTLYFDIDTDVALERIMKNRADEVNRLDLERAEMHRKVREGYLEIVAKEPGRFVKIDASQSLEKVVADTLEVLKKRFVSEF.

10-17 (GPDGAGKT) is an ATP binding site.

The protein belongs to the thymidylate kinase family.

The enzyme catalyses dTMP + ATP = dTDP + ADP. In terms of biological role, phosphorylation of dTMP to form dTDP in both de novo and salvage pathways of dTTP synthesis. The chain is Thymidylate kinase from Lactococcus lactis subsp. cremoris (strain MG1363).